The following is a 163-amino-acid chain: Bacterial ISG15-like ubiquitin-like protein BilA (163 aa).

Ubiquitin-like BIL-type domains are found at residues 4–80 and 81–163; these read LVVF…RCKR and IRAT…RIEG. Residue G163 forms a Glycyl lysine isopeptide (Gly-Lys) (interchain with K-? in central tail fiber acceptor protein) linkage.

In terms of biological role, component of the Bil (bacterial ISG15-like) antiviral defense system, composed of BilA, BilB, BilC and BilD. The Bil system specifically conjugates a ubiquitin-like moiety (bilA) to the bacteriophage central tail fiber (CTF, or tip attachment protein J) via reactions involving E1 (bilD) and E2 (bilB). Modifies CTF of phage SECphi27 and SECphi4, which probably interferes with assembly of the phage tail. Also modifies T5 baseplate hub protein pb3 (gene D16), but not gp27 of phage T6 (Bil defends against T6). Bil-encoding bacteria produce mostly defective phage SECphi27, many of which have phage assembly defects, including no tails. SECphi27 phage progeny produced in E.coli with the Bil system inject less DNA into naive host cells, maybe because the phage are less able to adsorb and inject their DNA into host cells. Its function is as follows. Expression of the Bil system in E.coli (strain MG1655) confers about 100-fold resistance to phage SECphi27, SECphi18, SECphi6, SECphi4 and T5, but not to SECphi17. When cells expressing the Bil system are infected by phage SECphi27 at low multiplicity of infection (0.03 MOI) the culture survives, at 3.0 MOI the culture collapses at the same time as cells without the Bil system. This chain is Bacterial ISG15-like ubiquitin-like protein BilA, found in Collimonas sp. (strain OK412).